The chain runs to 178 residues: Adenine phosphoribosyltransferase (178 aa).

The protein belongs to the purine/pyrimidine phosphoribosyltransferase family. Homodimer.

The protein resides in the cytoplasm. The enzyme catalyses AMP + diphosphate = 5-phospho-alpha-D-ribose 1-diphosphate + adenine. Its pathway is purine metabolism; AMP biosynthesis via salvage pathway; AMP from adenine: step 1/1. In terms of biological role, catalyzes a salvage reaction resulting in the formation of AMP, that is energically less costly than de novo synthesis. In Helicobacter hepaticus (strain ATCC 51449 / 3B1), this protein is Adenine phosphoribosyltransferase.